Consider the following 299-residue polypeptide: Protein NSG2 (299 aa).

At Met1–Asn108 the chain is on the cytoplasmic side. Residue Ser90 is modified to Phosphoserine. A helical membrane pass occupies residues Ile109 to Leu129. The Lumenal segment spans residues Ser130–Gly161. The helical transmembrane segment at Val162 to Ile182 threads the bilayer. The Cytoplasmic portion of the chain corresponds to Leu183–Asn237. The chain crosses the membrane as a helical span at residues Ile238 to Gly258. Residues Val259–Asp268 lie on the Lumenal side of the membrane. Residues Ile269–Phe289 traverse the membrane as a helical segment. Residues Gly290–His299 are Cytoplasmic-facing.

The protein belongs to the INSIG family.

It localises to the endoplasmic reticulum membrane. Functionally, stabilizes the HMG-CoA reductase HMG2 by preventing its HRD1-dependent degradation. Binds directly to the sterol-sensing domain (SSD)-containing transmembrane region of HMG2, promoting its folding to protect it from degradation. The sequence is that of Protein NSG2 (NSG2) from Saccharomyces cerevisiae (strain ATCC 204508 / S288c) (Baker's yeast).